We begin with the raw amino-acid sequence, 110 residues long: Acylphosphatase (110 aa).

The 88-residue stretch at 21-108 (TRRYLVTGRV…TNLKSFRIEG (88 aa)) folds into the Acylphosphatase-like domain. Active-site residues include arginine 36 and asparagine 54.

The protein belongs to the acylphosphatase family.

The catalysed reaction is an acyl phosphate + H2O = a carboxylate + phosphate + H(+). This Koribacter versatilis (strain Ellin345) protein is Acylphosphatase (acyP).